We begin with the raw amino-acid sequence, 428 residues long: Elongation factor 1-alpha (428 aa).

A tr-type G domain is found at 5–225 (KPILNVAFIG…DAFQPPEKPT (221 aa)). The tract at residues 14–21 (GHVDAGKS) is G1. 14-21 (GHVDAGKS) lines the GTP pocket. S21 is a binding site for Mg(2+). Positions 70–74 (GVTID) are G2. The tract at residues 91–94 (DCPG) is G3. GTP-binding positions include 91–95 (DCPGH) and 149–152 (NKMD). A G4 region spans residues 149–152 (NKMD). The segment at 189-191 (ASL) is G5.

It belongs to the TRAFAC class translation factor GTPase superfamily. Classic translation factor GTPase family. EF-Tu/EF-1A subfamily.

The protein resides in the cytoplasm. It catalyses the reaction GTP + H2O = GDP + phosphate + H(+). GTP hydrolase that promotes the GTP-dependent binding of aminoacyl-tRNA to the A-site of ribosomes during protein biosynthesis. The polypeptide is Elongation factor 1-alpha (Methanococcus maripaludis (strain C7 / ATCC BAA-1331)).